Reading from the N-terminus, the 688-residue chain is Glycine--tRNA ligase beta subunit (688 aa).

The protein belongs to the class-II aminoacyl-tRNA synthetase family. As to quaternary structure, tetramer of two alpha and two beta subunits.

Its subcellular location is the cytoplasm. The catalysed reaction is tRNA(Gly) + glycine + ATP = glycyl-tRNA(Gly) + AMP + diphosphate. The sequence is that of Glycine--tRNA ligase beta subunit from Colwellia psychrerythraea (strain 34H / ATCC BAA-681) (Vibrio psychroerythus).